The primary structure comprises 376 residues: MRYADPSANRDLLGNRTLLFIFICAFALVTLLQQILYSKSYIKRYFEFYKEPLEFNSTRCLELRQEILEVKVLSMVKQSELFERWKSLQICKWAMDASEASLFKSTLSRCCNAPNFLFTTQKNTPVETNLRYEVESSGLYHIDQEIFKMFPKEMPYYRSQFKKCAVVGNGGILKNSGCGKEINSADFVFRCNLPPISGIYTTDVGEKTDVVTVNPSIIIDRFHKLEKWRRPFFSVLQRYENASVLLPAFYNVRNTLVSFRVKYMLDDFQSRQPVYFFHPQYLSSVSRYWLSLGVRARRISTGLILVTAALELCEEVHLFGFWAFPMNPSGFFITHHYYDNVKPKPGFHAMPSEIFTFLRMHSRGILRVHTGTCNCC.

The helical transmembrane segment at 17 to 37 (TLLFIFICAFALVTLLQQILY) threads the bilayer. N56 is a glycosylation site (N-linked (GlcNAc...) asparagine). 2 disulfides stabilise this stretch: C164-C313 and C178-C373. Substrate is bound by residues N192 and 214–216 (NPS). An N-linked (GlcNAc...) asparagine glycan is attached at N241. 300–302 (STG) lines the substrate pocket. H348 acts as the Proton donor/acceptor in catalysis.

The protein belongs to the glycosyltransferase 29 family. Expressed in liver.

The protein resides in the golgi apparatus membrane. It catalyses the reaction a ganglioside GT1b (d18:1(4E)) + CMP-N-acetyl-beta-neuraminate = a ganglioside GQ1b (d18:1(4E)) + CMP + H(+). It carries out the reaction a ganglioside GQ1c (d18:1(4E)) + CMP-N-acetyl-beta-neuraminate = a ganglioside GP1c (d18:1(4E)) + CMP + H(+). The catalysed reaction is a ganglioside GD3 (d18:1(4E)) + CMP-N-acetyl-beta-neuraminate = a ganglioside GT3 (d18:1(4E)) + CMP + H(+). The enzyme catalyses a ganglioside GD1a (d18:1(4E)) + CMP-N-acetyl-beta-neuraminate = a ganglioside GT1a (d18:1(4E)) + CMP + H(+). It catalyses the reaction a ganglioside GM1b (d18:1(4E)) + CMP-N-acetyl-beta-neuraminate = a ganglioside GD1c (d18:1(4E)) + CMP + H(+). Its pathway is protein modification; protein glycosylation. In terms of biological role, involved in the synthesis of gangliosides GD1c, GT1a, GQ1b, GP1c and GT3 from GD1a, GT1b, GM1b and GD3 respectively. This Rattus norvegicus (Rat) protein is Alpha-2,8-sialyltransferase 8E.